The chain runs to 202 residues: Dephospho-CoA kinase (202 aa).

The DPCK domain maps to threonine 3–leucine 202. Glycine 11 to valine 16 is an ATP binding site. The tract at residues arginine 138–glutamine 161 is disordered.

It belongs to the CoaE family.

The protein resides in the cytoplasm. It catalyses the reaction 3'-dephospho-CoA + ATP = ADP + CoA + H(+). It participates in cofactor biosynthesis; coenzyme A biosynthesis; CoA from (R)-pantothenate: step 5/5. Its function is as follows. Catalyzes the phosphorylation of the 3'-hydroxyl group of dephosphocoenzyme A to form coenzyme A. In Porphyromonas gingivalis (strain ATCC BAA-308 / W83), this protein is Dephospho-CoA kinase.